The chain runs to 51 residues: SPbeta prophage-derived uncharacterized protein YorQ (51 aa).

The chain is SPbeta prophage-derived uncharacterized protein YorQ (yorQ) from Bacillus subtilis (strain 168).